The sequence spans 368 residues: RAB6-interacting golgin (368 aa).

Disordered regions lie at residues 1–43, 55–133, and 302–368; these read MAQD…REKA, DGSA…DCKV, and KQMA…AVAT. The span at 11 to 27 shows a compositional bias: basic and acidic residues; the sequence is EELRRLKQNKDPFEPQR. The segment covering 80-89 has biased composition (pro residues); that stretch reads SPSPVAPSPL. The span at 114-133 shows a compositional bias: basic and acidic residues; it reads NSHHGHKSAEVRAPKPDCKV. Residues 145 to 310 are a coiled coil; it reads RWEVLQQEQR…AKQMASVERL (166 aa). The necessary for interaction with RCHY1 stretch occupies residues 188–368; it reads IQKELQALDD…AKNFSAAVAT (181 aa).

Belongs to the GORAB family. As to quaternary structure, interacts with RCHY1. Interacts with SCYL1 and RAB6A/RAB6. As to expression, expressed in small intestine, kidney, skeletal muscle, lung, spleen, brain and heart. High expression is observed in osteoblasts and skin; also expressed in osteoclasts albeit at lower levels.

It is found in the cytoplasm. It localises to the golgi apparatus. The chain is RAB6-interacting golgin (Gorab) from Mus musculus (Mouse).